Here is a 189-residue protein sequence, read N- to C-terminus: Interferon alpha-F (189 aa).

Positions Met1–Gly23 are cleaved as a signal peptide. 2 disulfides stabilise this stretch: Cys24/Cys122 and Cys52/Cys162.

It belongs to the alpha/beta interferon family.

It is found in the secreted. In terms of biological role, produced by macrophages, IFN-alpha have antiviral activities. Interferon stimulates the production of two enzymes: a protein kinase and an oligoadenylate synthetase. This Bos taurus (Bovine) protein is Interferon alpha-F (IFNAF).